Here is a 132-residue protein sequence, read N- to C-terminus: Replication enhancer protein (132 aa).

The protein belongs to the geminiviridae replication enhancer protein family. Homooligomer. Interacts with the replication-associated protein (REP). Interacts with host proliferating cell nuclear antigen (PCNA). Interacts with host retinoblastoma-related protein 1 (RBR1), and may thereby deregulate the host cell cycle. Oligomerization and interaction with PCNA are necessary for optimal replication enhancement.

Increases viral DNA accumulation. Enhances infectivity and symptom expression. The chain is Replication enhancer protein from Abutilon (Upland cotton).